The primary structure comprises 387 residues: 3-ketoacyl-CoA thiolase (387 aa).

Cys-91 functions as the Acyl-thioester intermediate in the catalytic mechanism. Residues His-343 and Cys-373 each act as proton acceptor in the active site.

The protein belongs to the thiolase-like superfamily. Thiolase family. Heterotetramer of two alpha chains (FadB) and two beta chains (FadA).

Its subcellular location is the cytoplasm. The enzyme catalyses an acyl-CoA + acetyl-CoA = a 3-oxoacyl-CoA + CoA. Its pathway is lipid metabolism; fatty acid beta-oxidation. Functionally, catalyzes the final step of fatty acid oxidation in which acetyl-CoA is released and the CoA ester of a fatty acid two carbons shorter is formed. The polypeptide is 3-ketoacyl-CoA thiolase (Klebsiella pneumoniae subsp. pneumoniae (strain ATCC 700721 / MGH 78578)).